The primary structure comprises 510 residues: Myosin-binding protein C, cardiac-type (510 aa).

Ig-like C2-type domains lie at 177 to 269 (KKST…VKEP), 270 to 347 (PYSS…TVKT), and 378 to 438 (RDQA…SFIP).

It belongs to the immunoglobulin superfamily. MyBP family. In terms of tissue distribution, heart.

In terms of biological role, thick filament-associated protein located in the crossbridge region of vertebrate striated muscle a bands. In vitro it binds MHC, F-actin and native thin filaments, and modifies the activity of actin-activated myosin ATPase. It may modulate muscle contraction or may play a more structural role. In Ambystoma mexicanum (Axolotl), this protein is Myosin-binding protein C, cardiac-type.